Consider the following 334-residue polypeptide: Probable 3-hydroxyisobutyrate dehydrogenase-like 1, mitochondrial (334 aa).

Residues 1–23 (MPLLLRRFPSPSVVSSFFLRRSM) constitute a mitochondrion transit peptide. Alanine 24 is modified (N-acetylalanine). Residues 38-67 (TKIG…TVFN) and threonine 133 each bind NAD(+). Lysine 207 is an active-site residue. Lysine 275 serves as a coordination point for NAD(+).

Belongs to the HIBADH-related family. 3-hydroxyisobutyrate dehydrogenase subfamily.

It is found in the mitochondrion. The enzyme catalyses 3-hydroxy-2-methylpropanoate + NAD(+) = 2-methyl-3-oxopropanoate + NADH + H(+). It participates in amino-acid degradation; L-valine degradation. The protein is Probable 3-hydroxyisobutyrate dehydrogenase-like 1, mitochondrial of Arabidopsis thaliana (Mouse-ear cress).